A 250-amino-acid polypeptide reads, in one-letter code: Peptidyl-tRNA hydrolase (250 aa).

Y14 serves as a coordination point for tRNA. The Proton acceptor role is filled by H19. TRNA-binding residues include F64, N66, and N112. Residues M192–D250 form a disordered region. The span at H219–K229 shows a compositional bias: polar residues. A compositionally biased stretch (basic and acidic residues) spans M241 to D250.

It belongs to the PTH family. As to quaternary structure, monomer.

Its subcellular location is the cytoplasm. The catalysed reaction is an N-acyl-L-alpha-aminoacyl-tRNA + H2O = an N-acyl-L-amino acid + a tRNA + H(+). Its function is as follows. Hydrolyzes ribosome-free peptidyl-tRNAs (with 1 or more amino acids incorporated), which drop off the ribosome during protein synthesis, or as a result of ribosome stalling. In terms of biological role, catalyzes the release of premature peptidyl moieties from peptidyl-tRNA molecules trapped in stalled 50S ribosomal subunits, and thus maintains levels of free tRNAs and 50S ribosomes. This is Peptidyl-tRNA hydrolase from Brucella abortus (strain 2308).